A 142-amino-acid polypeptide reads, in one-letter code: Transcriptional regulator MraZ (142 aa).

SpoVT-AbrB domains are found at residues 5–51 (ASSL…PRPE) and 77–120 (AMDV…DKAT).

Belongs to the MraZ family. As to quaternary structure, forms oligomers.

The protein localises to the cytoplasm. It localises to the nucleoid. This Variovorax paradoxus (strain S110) protein is Transcriptional regulator MraZ.